Consider the following 140-residue polypeptide: MRWLIWTAVSTLVMLLAMTEVSASIRTPEISTKGSTSATAFRARSLSSEYNSLEKRSLRDKSSSLITESEERSIAESLANKVVNRLFKTLYKKEMTPLTFRAKMMGRDNFLVGDYKVWWDKARATGTIPKWKFQRSKSYT.

Positions 1–24 are cleaved as a signal peptide; sequence MRWLIWTAVSTLVMLLAMTEVSAS. Positions 56 to 72 match the RxLR-dEER motif; it reads RSLRDKSSSLITESEER.

The protein belongs to the RxLR effector family.

It localises to the secreted. The protein localises to the host cell. Functionally, effector that is involved in host plant infection. Contributes to virulence during the early infection stage, by inhibiting plant defense responses induced by both PAMP-triggered immunity (PTI) and effector-triggered immunity (ETI). In Phytophthora infestans (strain T30-4) (Potato late blight agent), this protein is RxLR effector protein CRE2.